Reading from the N-terminus, the 57-residue chain is Large ribosomal subunit protein bL33 (57 aa).

It belongs to the bacterial ribosomal protein bL33 family.

This chain is Large ribosomal subunit protein bL33, found in Shewanella denitrificans (strain OS217 / ATCC BAA-1090 / DSM 15013).